Reading from the N-terminus, the 699-residue chain is Cysteine--tRNA ligase (699 aa).

The unknown stretch occupies residues 1 to 226 (MTTITEKRLT…SEQQRLIHNP (226 aa)). C254 is a binding site for Zn(2+). The 'HIGH' region motif lies at 256-266 (MTVYDYCHLGH). The Zn(2+) site is built by C435, H460, and E464. The 'KMSKS' region signature appears at 508–512 (KMSKS). Residue K511 coordinates ATP.

Belongs to the class-I aminoacyl-tRNA synthetase family. As to quaternary structure, monomer. Zn(2+) is required as a cofactor.

Its subcellular location is the cytoplasm. It catalyses the reaction tRNA(Cys) + L-cysteine + ATP = L-cysteinyl-tRNA(Cys) + AMP + diphosphate. This chain is Cysteine--tRNA ligase (cysS), found in Neisseria meningitidis serogroup A / serotype 4A (strain DSM 15465 / Z2491).